A 335-amino-acid polypeptide reads, in one-letter code: Probable cytosolic iron-sulfur protein assembly protein Ciao1 (335 aa).

7 WD repeats span residues 12-51 (GHKG…WTTK), 57-96 (GHKR…FECN), 101-140 (GHEN…EFEC), 146-185 (PHTQ…SDWD), 192-231 (SHTS…NDAG), 250-289 (QHSR…KRDE), and 301-335 (AHDQ…KMTE).

It belongs to the WD repeat CIA1 family.

In terms of biological role, essential component of the cytosolic iron-sulfur (Fe/S) protein assembly machinery. Required for the maturation of extramitochondrial Fe/S proteins. In Drosophila ananassae (Fruit fly), this protein is Probable cytosolic iron-sulfur protein assembly protein Ciao1.